Here is a 132-residue protein sequence, read N- to C-terminus: C-glycoside deglycosidase beta subunit (132 aa).

Belongs to the C-glycoside deglycosidase beta subunit family. In terms of assembly, heterodimer composed of an alpha subunit (CarB2) and a beta subunit (CarC2). A divalent metal cation serves as cofactor.

It catalyses the reaction 3''-dehydroorientin = 1,5-anhydro-D-erythro-hex-1-en-3-ulose + luteolin. Its activity is regulated as follows. Activity is strongly reduced in the presence of chelating agents. Functionally, carbon-carbon bond-cleaving enzyme which participates in the metabolism of C-glycosides. Acts on the C8-glycosylated compound 3''-dehydroorientin (3''-oxo-orientin). The protein is C-glycoside deglycosidase beta subunit of Arthrobacter globiformis (strain ATCC 8010 / DSM 20124 / JCM 1332 / NBRC 12137 / NCIMB 8907 / NRRL B-2979 / 168).